The sequence spans 152 residues: Cytochrome c-type biogenesis CcmH-like mitochondrial protein (152 aa).

The Mitochondrial intermembrane segment spans residues 1 to 83 (MATEEDVKQR…ILYTPKFDLQ (83 aa)). Heme contacts are provided by Cys-26 and Cys-29. Residues 84–104 (TAAIWLSPVIVGGVAAGVWAY) form a helical membrane-spanning segment. The Mitochondrial matrix portion of the chain corresponds to 105 to 152 (QKHRQRTNVHIMALNLVRGVPLTPREKETMLDVLTPPPPANKWWWPGK).

This sequence belongs to the CcmH/CycL/Ccl2/NrfF family.

It localises to the mitochondrion inner membrane. Its function is as follows. Plays a role in mitochondrial cytochrome c maturation. Probable component of a heme lyase complex involved in the reduction of apocytochrome c. This Oryza sativa subsp. japonica (Rice) protein is Cytochrome c-type biogenesis CcmH-like mitochondrial protein.